A 784-amino-acid polypeptide reads, in one-letter code: Transcription factor E4F1 (784 aa).

The interval 41 to 85 (GFLGLPAPFSEEDEDDVHRCGRCQAEFTALEDFVQHKIQKACQRA) is required for ubiquitin ligase activity. Residue S50 is modified to Phosphoserine. Residues 184-263 (LLVNKDGRYV…GKSFRESGAL (80 aa)) are mediates dimerization, DNA-binding, transcription repression of CCNA2 and interaction with HMGA2. 2 consecutive C2H2-type zinc fingers follow at residues 192 to 214 (YVCALCHKTFKTGSILKAHMVTH) and 220 to 242 (HECKLCGASFRTKGSLIRHHRRH). A C2H2-type 3; degenerate zinc finger spans residues 248 to 272 (YKCSKCGKSFRESGALTRHLKSLTP). The segment at 369-566 (NLLHQAMQNS…REKGSLVRHV (198 aa)) is mediates interaction with CDKN2A. 5 consecutive C2H2-type zinc fingers follow at residues 435–457 (HPCPQCSETFPTAATLEAHKRGH), 463–485 (FACAQCGKAFPKAYLLKKHQEVH), 491–513 (FRCGDCGKLYKTIAHVRGHRRVH), 519–541 (YPCPKCGKRYKTKNAQQVHFRTH), and 547–569 (HVCQFCSRGFREKGSLVRHVRHH). An interaction with BMI1 region spans residues 435-599 (HPCPQCSETF…LNRHLRTKGG (165 aa)). The segment at 521-580 (CPKCGKRYKTKNAQQVHFRTHLEEKPHVCQFCSRGFREKGSLVRHVRHHTGEKPFKCYKC) is mediates interaction with TP53. The C2H2-type 9; degenerate zinc-finger motif lies at 575–597 (FKCYKCGRGFAEHGTLNRHLRTK). Positions 575–597 (FKCYKCGRGFAEHGTLNRHLRTK) are mediates interaction with RASSF1.

Homodimer; binds DNA as a dimer. Forms a complex with CDKN2A and TP53. Interactions with TP53, RB1, ANP32A, BMI1 and FHL2 regulate E4F1 activity. Interacts with HDAC1, HMGA2 and RASSF1. In terms of assembly, (Microbial infection) Interacts with HBV protein X. Proteolytic cleavage produces a 50 kDa N-terminal peptide (p50E4F) which has a DNA-binding activity and activates transcription in presence of the adenoviral E1A protein. The major full-length protein (p120E4F) functions as a repressor of transcription. Post-translationally, phosphorylated; p120E4F and p50E4F are both phosphorylated. Phosphorylation is cell cycle-dependent and differentially regulates DNA-binding activity and function of both forms. In terms of processing, may be sumoylated by UBE2I upon interaction with CDKN2A. Ubiquitously expressed.

Its subcellular location is the nucleus. It is found in the nucleoplasm. The protein localises to the cytoplasm. It catalyses the reaction S-ubiquitinyl-[E2 ubiquitin-conjugating enzyme]-L-cysteine + [acceptor protein]-L-lysine = [E2 ubiquitin-conjugating enzyme]-L-cysteine + N(6)-ubiquitinyl-[acceptor protein]-L-lysine.. It functions in the pathway protein modification; protein ubiquitination. Its function is as follows. May function as a transcriptional repressor. May also function as a ubiquitin ligase mediating ubiquitination of chromatin-associated TP53. Functions in cell survival and proliferation through control of the cell cycle. Functions in the p53 and pRB tumor suppressor pathways and regulates the cyclin CCNA2 transcription. Identified as a cellular target of the adenoviral oncoprotein E1A, it is required for both transcriptional activation and repression of viral genes. The protein is Transcription factor E4F1 (E4F1) of Homo sapiens (Human).